Here is a 192-residue protein sequence, read N- to C-terminus: Ribosome maturation factor RimM (192 aa).

The PRC barrel domain occupies 115 to 189; that stretch reads EGEYYLSDLI…RIEITPPKGL (75 aa).

The protein belongs to the RimM family. As to quaternary structure, binds ribosomal protein uS19.

The protein localises to the cytoplasm. Its function is as follows. An accessory protein needed during the final step in the assembly of 30S ribosomal subunit, possibly for assembly of the head region. Essential for efficient processing of 16S rRNA. May be needed both before and after RbfA during the maturation of 16S rRNA. It has affinity for free ribosomal 30S subunits but not for 70S ribosomes. This Acaryochloris marina (strain MBIC 11017) protein is Ribosome maturation factor RimM.